Here is a 509-residue protein sequence, read N- to C-terminus: 2-succinyl-5-enolpyruvyl-6-hydroxy-3-cyclohexene-1-carboxylate synthase (509 aa).

The protein belongs to the TPP enzyme family. MenD subfamily. Homodimer. Requires Mg(2+) as cofactor. Mn(2+) is required as a cofactor. Thiamine diphosphate serves as cofactor.

The catalysed reaction is isochorismate + 2-oxoglutarate + H(+) = 5-enolpyruvoyl-6-hydroxy-2-succinyl-cyclohex-3-ene-1-carboxylate + CO2. The protein operates within quinol/quinone metabolism; 1,4-dihydroxy-2-naphthoate biosynthesis; 1,4-dihydroxy-2-naphthoate from chorismate: step 2/7. It functions in the pathway quinol/quinone metabolism; menaquinone biosynthesis. In terms of biological role, catalyzes the thiamine diphosphate-dependent decarboxylation of 2-oxoglutarate and the subsequent addition of the resulting succinic semialdehyde-thiamine pyrophosphate anion to isochorismate to yield 2-succinyl-5-enolpyruvyl-6-hydroxy-3-cyclohexene-1-carboxylate (SEPHCHC). The polypeptide is 2-succinyl-5-enolpyruvyl-6-hydroxy-3-cyclohexene-1-carboxylate synthase (Corynebacterium diphtheriae (strain ATCC 700971 / NCTC 13129 / Biotype gravis)).